The chain runs to 147 residues: Hemoglobin subunit beta (147 aa).

N-acetylvaline is present on Val2. The 145-residue stretch at 3 to 147 (HLSAEEKGHI…VATALAHKYH (145 aa)) folds into the Globin domain. Lys60 carries the N6-acetyllysine modification. His64 lines the heme b pocket. Lys83 is modified (N6-acetyllysine). His93 is a heme b binding site. Cys94 is subject to S-nitrosocysteine. At Lys145 the chain carries N6-acetyllysine.

The protein belongs to the globin family. Heterotetramer of two alpha chains and two beta chains. Red blood cells.

Involved in oxygen transport from the lung to the various peripheral tissues. This chain is Hemoglobin subunit beta (HBB), found in Sminthopsis crassicaudata (Fat-tailed dunnart).